A 254-amino-acid chain; its full sequence is DNA repair protein RecO (254 aa).

This sequence belongs to the RecO family.

In terms of biological role, involved in DNA repair and RecF pathway recombination. This Agrobacterium fabrum (strain C58 / ATCC 33970) (Agrobacterium tumefaciens (strain C58)) protein is DNA repair protein RecO.